We begin with the raw amino-acid sequence, 520 residues long: GMP synthase [glutamine-hydrolyzing] (520 aa).

Positions 12 to 205 constitute a Glutamine amidotransferase type-1 domain; sequence KIIVLDYGSQ…AISICGARGD (194 aa). Catalysis depends on Cys-89, which acts as the Nucleophile. Catalysis depends on residues His-179 and Glu-181. The GMPS ATP-PPase domain occupies 206 to 395; it reads WSMDNFIDME…LGMPEEIVWR (190 aa). ATP is bound at residue 233 to 239; that stretch reads SGGVDSS.

In terms of assembly, homodimer.

The catalysed reaction is XMP + L-glutamine + ATP + H2O = GMP + L-glutamate + AMP + diphosphate + 2 H(+). Its pathway is purine metabolism; GMP biosynthesis; GMP from XMP (L-Gln route): step 1/1. Catalyzes the synthesis of GMP from XMP. This Streptococcus pyogenes serotype M3 (strain SSI-1) protein is GMP synthase [glutamine-hydrolyzing].